A 164-amino-acid polypeptide reads, in one-letter code: Transcriptional repressor NrdR (164 aa).

The segment at 3–34 (CPKCNYNKSSVVDSRQAEDGNTIRRRRECESC) is a zinc-finger region. Positions 49–139 (LLVIKKDGTR…VYKSFKDLDE (91 aa)) constitute an ATP-cone domain.

The protein belongs to the NrdR family. Zn(2+) serves as cofactor.

In terms of biological role, negatively regulates transcription of bacterial ribonucleotide reductase nrd genes and operons by binding to NrdR-boxes. This Streptococcus equi subsp. zooepidemicus (strain H70) protein is Transcriptional repressor NrdR.